Consider the following 251-residue polypeptide: Transmembrane ascorbate-dependent reductase CYB561 (251 aa).

N-acetylmethionine is present on Met1. The Cytoplasmic portion of the chain corresponds to Met1–Tyr16. Residues Val17–Leu37 form a helical membrane-spanning segment. In terms of domain architecture, Cytochrome b561 spans Phe19–Thr220. The Vesicular segment spans residues Tyr38–Asn51. A helical membrane pass occupies residues Ala52 to Tyr72. Heme b is bound by residues His53, Arg73, and Lys80. Topologically, residues Arg73–Val85 are cytoplasmic. The L-ascorbate site is built by Lys80 and Lys84. The helical transmembrane segment at Leu86–Phe106 threads the bilayer. Residues His87, Asp116–Ser119, and His121 each bind heme b. Residues Asp107 to Cys124 are Vesicular-facing. A helical transmembrane segment spans residues Gly125 to Phe145. Residues Pro146 to Pro158 are Cytoplasmic-facing. Arg153 is a binding site for L-ascorbate. A helical membrane pass occupies residues Gln159–Leu179. Residues His160 and Glu181 each contribute to the heme b site. The Vesicular portion of the chain corresponds to Lys180–Gly198. Residues Val199–Leu219 traverse the membrane as a helical segment. Residues Thr220–Gln251 are Cytoplasmic-facing. Lys225 provides a ligand contact to heme b. Residue Ser247 is modified to Phosphoserine.

It depends on heme b as a cofactor. In terms of tissue distribution, expressed in many tissues, in particular the brain especially in the cortex and hippocampus.

It is found in the cytoplasmic vesicle. Its subcellular location is the secretory vesicle. The protein localises to the chromaffin granule membrane. The enzyme catalyses monodehydro-L-ascorbate radical(out) + L-ascorbate(in) = monodehydro-L-ascorbate radical(in) + L-ascorbate(out). Functionally, transmembrane reductase that uses ascorbate as an electron donor in the cytoplasm and transfers electrons across membranes to reduce monodehydro-L-ascorbate radical in the lumen of secretory vesicles. It is therefore involved the regeneration and homeostasis within secretory vesicles of ascorbate which in turn provides reducing equivalents needed to support the activity of intravesicular enzymes. This chain is Transmembrane ascorbate-dependent reductase CYB561, found in Homo sapiens (Human).